The chain runs to 417 residues: UDP-N-acetylglucosamine 1-carboxyvinyltransferase (417 aa).

22–23 is a binding site for phosphoenolpyruvate; it reads KN. Arginine 93 provides a ligand contact to UDP-N-acetyl-alpha-D-glucosamine. Cysteine 117 (proton donor) is an active-site residue. Position 117 is a 2-(S-cysteinyl)pyruvic acid O-phosphothioketal (cysteine 117). UDP-N-acetyl-alpha-D-glucosamine contacts are provided by residues 122–126, aspartate 305, and isoleucine 327; that span reads RPVDL.

The protein belongs to the EPSP synthase family. MurA subfamily.

It localises to the cytoplasm. It catalyses the reaction phosphoenolpyruvate + UDP-N-acetyl-alpha-D-glucosamine = UDP-N-acetyl-3-O-(1-carboxyvinyl)-alpha-D-glucosamine + phosphate. It participates in cell wall biogenesis; peptidoglycan biosynthesis. Cell wall formation. Adds enolpyruvyl to UDP-N-acetylglucosamine. This Thiobacillus denitrificans (strain ATCC 25259 / T1) protein is UDP-N-acetylglucosamine 1-carboxyvinyltransferase.